Here is a 35-residue protein sequence, read N- to C-terminus: Photosystem II reaction center protein M (35 aa).

The chain crosses the membrane as a helical span at residues 5 to 25 (ILAVIATALFIIIPTSFLLIL).

It belongs to the PsbM family. PSII is composed of 1 copy each of membrane proteins PsbA, PsbB, PsbC, PsbD, PsbE, PsbF, PsbH, PsbI, PsbJ, PsbK, PsbL, PsbM, PsbT, PsbX, PsbY, PsbZ, Psb30/Ycf12, at least 3 peripheral proteins of the oxygen-evolving complex and a large number of cofactors. It forms dimeric complexes.

The protein resides in the plastid. It localises to the chloroplast thylakoid membrane. Its function is as follows. One of the components of the core complex of photosystem II (PSII). PSII is a light-driven water:plastoquinone oxidoreductase that uses light energy to abstract electrons from H(2)O, generating O(2) and a proton gradient subsequently used for ATP formation. It consists of a core antenna complex that captures photons, and an electron transfer chain that converts photonic excitation into a charge separation. This subunit is found at the monomer-monomer interface. This is Photosystem II reaction center protein M from Staurastrum punctulatum (Green alga).